The sequence spans 485 residues: MAANTGIIKGNTHEWEMVVGLEVHAQVISNSKLFSGASTGFCSEPNTQVALFDVAMPGTLPVLNARCVEQAVRTSLALSCEVHKYSVFDRKNYFYPDLASGYQITQFYFPIATDGYITLDECCSKDVRISRIHLEQDAGKSMHVGDKTYLDFNRAGVALMEIVSAPDFRSPEEAAEYIKKLRIILRAIGTCDGDMENGSLRCDANVSVRKVGDSNLGARSEIKNLNSIKHLAQAIRHEACRQVEVLESGGVVSQSTMLFDVDTCTTRSMREKEDACDYRYFPDPDLLPLELTTAFIDNIRASLPELPSEKKRRYMQDIGLSRYDADILSSDKDVSAYFESVVAKHAPDLAVPWITGELFGALNKRGSSIADSPVSAGRLVELLDLVADGTISGKMAKQVFALMFETEKSASDIVREQGLCQITSEETLAPIVDRIISESPDEVAEYRQGKTKLLGYFVGKVMKETNGQANPGLVNTLIKRRLAED.

Belongs to the GatB/GatE family. GatB subfamily. As to quaternary structure, heterotrimer of A, B and C subunits.

It carries out the reaction L-glutamyl-tRNA(Gln) + L-glutamine + ATP + H2O = L-glutaminyl-tRNA(Gln) + L-glutamate + ADP + phosphate + H(+). It catalyses the reaction L-aspartyl-tRNA(Asn) + L-glutamine + ATP + H2O = L-asparaginyl-tRNA(Asn) + L-glutamate + ADP + phosphate + 2 H(+). Its function is as follows. Allows the formation of correctly charged Asn-tRNA(Asn) or Gln-tRNA(Gln) through the transamidation of misacylated Asp-tRNA(Asn) or Glu-tRNA(Gln) in organisms which lack either or both of asparaginyl-tRNA or glutaminyl-tRNA synthetases. The reaction takes place in the presence of glutamine and ATP through an activated phospho-Asp-tRNA(Asn) or phospho-Glu-tRNA(Gln). The polypeptide is Aspartyl/glutamyl-tRNA(Asn/Gln) amidotransferase subunit B (Anaplasma marginale (strain St. Maries)).